Consider the following 212-residue polypeptide: Thiamine-phosphate synthase (212 aa).

4-amino-2-methyl-5-(diphosphooxymethyl)pyrimidine contacts are provided by residues 40 to 44 and N75; that span reads QFREK. Mg(2+)-binding residues include D76 and D95. S113 serves as a coordination point for 4-amino-2-methyl-5-(diphosphooxymethyl)pyrimidine. 139-141 contributes to the 2-[(2R,5Z)-2-carboxy-4-methylthiazol-5(2H)-ylidene]ethyl phosphate binding site; that stretch reads TPS. Position 142 (K142) interacts with 4-amino-2-methyl-5-(diphosphooxymethyl)pyrimidine. 2-[(2R,5Z)-2-carboxy-4-methylthiazol-5(2H)-ylidene]ethyl phosphate-binding positions include G171 and 191-192; that span reads IS.

This sequence belongs to the thiamine-phosphate synthase family. Mg(2+) serves as cofactor.

It carries out the reaction 2-[(2R,5Z)-2-carboxy-4-methylthiazol-5(2H)-ylidene]ethyl phosphate + 4-amino-2-methyl-5-(diphosphooxymethyl)pyrimidine + 2 H(+) = thiamine phosphate + CO2 + diphosphate. It catalyses the reaction 2-(2-carboxy-4-methylthiazol-5-yl)ethyl phosphate + 4-amino-2-methyl-5-(diphosphooxymethyl)pyrimidine + 2 H(+) = thiamine phosphate + CO2 + diphosphate. The enzyme catalyses 4-methyl-5-(2-phosphooxyethyl)-thiazole + 4-amino-2-methyl-5-(diphosphooxymethyl)pyrimidine + H(+) = thiamine phosphate + diphosphate. The protein operates within cofactor biosynthesis; thiamine diphosphate biosynthesis; thiamine phosphate from 4-amino-2-methyl-5-diphosphomethylpyrimidine and 4-methyl-5-(2-phosphoethyl)-thiazole: step 1/1. In terms of biological role, condenses 4-methyl-5-(beta-hydroxyethyl)thiazole monophosphate (THZ-P) and 2-methyl-4-amino-5-hydroxymethyl pyrimidine pyrophosphate (HMP-PP) to form thiamine monophosphate (TMP). The protein is Thiamine-phosphate synthase of Staphylococcus carnosus (strain TM300).